Consider the following 463-residue polypeptide: Chromosomal replication initiator protein DnaA (463 aa).

Positions 1–83 (MSTNQIILTD…LQLFQHYNNT (83 aa)) are domain I, interacts with DnaA modulators. The interval 83–124 (TIKSIEIITKELPGTTQTVTELPTKTFADIGSSELNSENIFS) is domain II. The interval 125 to 343 (TLDVRFTFDN…GALNKVIAHS (219 aa)) is domain III, AAA+ region. The ATP site is built by Gly-171, Gly-173, Lys-174, and Thr-175. The interval 344–463 (NFTLKEITLE…INLLMKILQN (120 aa)) is domain IV, binds dsDNA.

Belongs to the DnaA family. Oligomerizes as a right-handed, spiral filament on DNA at oriC.

The protein localises to the cytoplasm. Functionally, plays an essential role in the initiation and regulation of chromosomal replication. ATP-DnaA binds to the origin of replication (oriC) to initiate formation of the DNA replication initiation complex once per cell cycle. Binds the DnaA box (a 9 base pair repeat at the origin) and separates the double-stranded (ds)DNA. Forms a right-handed helical filament on oriC DNA; dsDNA binds to the exterior of the filament while single-stranded (ss)DNA is stabiized in the filament's interior. The ATP-DnaA-oriC complex binds and stabilizes one strand of the AT-rich DNA unwinding element (DUE), permitting loading of DNA polymerase. After initiation quickly degrades to an ADP-DnaA complex that is not apt for DNA replication. Binds acidic phospholipids. The polypeptide is Chromosomal replication initiator protein DnaA (Rickettsia conorii (strain ATCC VR-613 / Malish 7)).